The primary structure comprises 557 residues: Urocanate hydratase (557 aa).

Residues 52–53, Gln130, 176–178, Glu196, Arg201, 242–243, 263–267, 273–274, and Tyr322 each bind NAD(+); these read GG, GMG, NA, QTSAH, and YL. Residue Cys410 is part of the active site. Residue Gly492 participates in NAD(+) binding.

This sequence belongs to the urocanase family. NAD(+) serves as cofactor.

The protein resides in the cytoplasm. It carries out the reaction 4-imidazolone-5-propanoate = trans-urocanate + H2O. It participates in amino-acid degradation; L-histidine degradation into L-glutamate; N-formimidoyl-L-glutamate from L-histidine: step 2/3. Functionally, catalyzes the conversion of urocanate to 4-imidazolone-5-propionate. The protein is Urocanate hydratase of Allorhizobium ampelinum (strain ATCC BAA-846 / DSM 112012 / S4) (Agrobacterium vitis (strain S4)).